The chain runs to 147 residues: Transcriptional repressor NrdR (147 aa).

The segment at Cys3 to Cys34 is a zinc-finger region. The 91-residue stretch at Pro49–Glu139 folds into the ATP-cone domain.

It belongs to the NrdR family. Requires Zn(2+) as cofactor.

Functionally, negatively regulates transcription of bacterial ribonucleotide reductase nrd genes and operons by binding to NrdR-boxes. The polypeptide is Transcriptional repressor NrdR (Variovorax paradoxus (strain S110)).